The chain runs to 230 residues: Ubiquitin carboxyl-terminal hydrolase isozyme L3 (230 aa).

A UCH catalytic domain is found at 5–229 (RWLPLEANPE…LRFNAIALSA (225 aa)). Residues 8 to 13 (PLEANP) are interaction with ubiquitin. Residue Cys-95 is the Nucleophile of the active site. At Ser-130 the chain carries Phosphoserine. Positions 152–159 (AHEGQTEA) are interaction with ubiquitin. Crossover loop which restricts access of large ubiquitin adducts to the active site. His-169 acts as the Proton donor in catalysis. An interaction with ubiquitin region spans residues 219–224 (ELRFNA).

It belongs to the peptidase C12 family. As to quaternary structure, preferentially binds diubiquitin; the interaction does not hydrolyze diubiquitin but, in vitro, inhibits the hydrolyzing activity on other substrates.

The protein localises to the cytoplasm. It carries out the reaction Thiol-dependent hydrolysis of ester, thioester, amide, peptide and isopeptide bonds formed by the C-terminal Gly of ubiquitin (a 76-residue protein attached to proteins as an intracellular targeting signal).. Inhibited by monoubiquitin and diubiquitin. Functionally, deubiquitinating enzyme (DUB) that controls levels of cellular ubiquitin through processing of ubiquitin precursors and ubiquitinated proteins. Thiol protease that recognizes and hydrolyzes a peptide bond at the C-terminal glycine of either ubiquitin or NEDD8. Has a 10-fold preference for Arg and Lys at position P3''. Deubiquitinates ENAC in apical compartments, thereby regulating apical membrane recycling. Indirectly increases the phosphorylation of IGFIR, AKT and FOXO1 and promotes insulin-signaling and insulin-induced adipogenesis. Required for stress-response retinal, skeletal muscle and germ cell maintenance. May be involved in working memory. Can hydrolyze UBB(+1), a mutated form of ubiquitin which is not effectively degraded by the proteasome. In Bos taurus (Bovine), this protein is Ubiquitin carboxyl-terminal hydrolase isozyme L3 (UCHL3).